A 296-amino-acid polypeptide reads, in one-letter code: Probable endonuclease 4 (296 aa).

Zn(2+)-binding residues include His69, His109, Glu160, Asp194, His197, His231, Asp244, His246, and Glu276.

The protein belongs to the AP endonuclease 2 family. Zn(2+) serves as cofactor.

It catalyses the reaction Endonucleolytic cleavage to 5'-phosphooligonucleotide end-products.. Endonuclease IV plays a role in DNA repair. It cleaves phosphodiester bonds at apurinic or apyrimidinic (AP) sites, generating a 3'-hydroxyl group and a 5'-terminal sugar phosphate. The chain is Probable endonuclease 4 from Sulfurovum sp. (strain NBC37-1).